A 287-amino-acid chain; its full sequence is Large ribosomal subunit protein uL2 (287 aa).

Residues 221-287 (RGSVMNPCDH…SKRSRGGRDS (67 aa)) are disordered. Residues 258–287 (KTRKKNKPSNKLVVRRRRRISKRSRGGRDS) are compositionally biased toward basic residues.

This sequence belongs to the universal ribosomal protein uL2 family. Part of the 50S ribosomal subunit. Forms a bridge to the 30S subunit in the 70S ribosome.

Functionally, one of the primary rRNA binding proteins. Required for association of the 30S and 50S subunits to form the 70S ribosome, for tRNA binding and peptide bond formation. It has been suggested to have peptidyltransferase activity; this is somewhat controversial. Makes several contacts with the 16S rRNA in the 70S ribosome. In Prochlorococcus marinus (strain MIT 9312), this protein is Large ribosomal subunit protein uL2.